Consider the following 529-residue polypeptide: NAD(P)H-quinone oxidoreductase chain 4 1 (529 aa).

Transmembrane regions (helical) follow at residues 4–24, 36–56, 91–111, 115–135, 137–157, 169–189, 209–229, 243–263, 277–297, 314–334, 335–355, 387–407, and 417–437; these read FPWL…IPFI, WYAL…FTNF, LILL…PVTL, LFYF…AVQD, LVFF…LAIW, FILY…AMAF, GFQL…LPIV, TAPV…YALI, FAPV…LTSY, IGFV…GAVL, QMVS…ATYD, LALP…GFAT, and VIVV…LLSM.

Belongs to the complex I subunit 4 family.

Its subcellular location is the cellular thylakoid membrane. It catalyses the reaction a plastoquinone + NADH + (n+1) H(+)(in) = a plastoquinol + NAD(+) + n H(+)(out). It carries out the reaction a plastoquinone + NADPH + (n+1) H(+)(in) = a plastoquinol + NADP(+) + n H(+)(out). NDH-1 shuttles electrons from NAD(P)H, via FMN and iron-sulfur (Fe-S) centers, to quinones in the respiratory chain. The immediate electron acceptor for the enzyme in this species is believed to be plastoquinone. Couples the redox reaction to proton translocation (for every two electrons transferred, four hydrogen ions are translocated across the cytoplasmic membrane), and thus conserves the redox energy in a proton gradient. The protein is NAD(P)H-quinone oxidoreductase chain 4 1 of Thermosynechococcus vestitus (strain NIES-2133 / IAM M-273 / BP-1).